We begin with the raw amino-acid sequence, 775 residues long: Acetamidase regulatory protein (775 aa).

Positions 1–15 are enriched in polar residues; sequence MSSTAHNSQPSTGNG. The tract at residues 1 to 20 is disordered; it reads MSSTAHNSQPSTGNGVTKRK. The zn(2)-C6 fungal-type DNA-binding region spans 26–59; the sequence is CIHCHRRKVRCDARIVGLPCSNCRSAGKADCRIH. The span at 126–153 shows a compositional bias: polar residues; it reads PHSSYTNGNHLSNNRGSQPITETQTFTR. 2 disordered regions span residues 126-159 and 630-699; these read PHSS…GADR and ATSE…HQNQ. Basic and acidic residues predominate over residues 630-644; it reads ATSERPRRFSTHDQN. The span at 674–689 shows a compositional bias: pro residues; sequence PRPPYEVPTPESPRMP.

It localises to the nucleus. Positively regulates the expression of genes involved in the catabolism of certain amides, omega amino acids, and lactams. This is Acetamidase regulatory protein (amdR) from Aspergillus oryzae (strain ATCC 42149 / RIB 40) (Yellow koji mold).